The primary structure comprises 163 residues: SsrA-binding protein (163 aa).

Belongs to the SmpB family.

It localises to the cytoplasm. Functionally, required for rescue of stalled ribosomes mediated by trans-translation. Binds to transfer-messenger RNA (tmRNA), required for stable association of tmRNA with ribosomes. tmRNA and SmpB together mimic tRNA shape, replacing the anticodon stem-loop with SmpB. tmRNA is encoded by the ssrA gene; the 2 termini fold to resemble tRNA(Ala) and it encodes a 'tag peptide', a short internal open reading frame. During trans-translation Ala-aminoacylated tmRNA acts like a tRNA, entering the A-site of stalled ribosomes, displacing the stalled mRNA. The ribosome then switches to translate the ORF on the tmRNA; the nascent peptide is terminated with the 'tag peptide' encoded by the tmRNA and targeted for degradation. The ribosome is freed to recommence translation, which seems to be the essential function of trans-translation. The chain is SsrA-binding protein from Shewanella baltica (strain OS223).